The sequence spans 109 residues: Small serum protein 2 (109 aa).

The signal sequence occupies residues Met-1–Gly-19. Intrachain disulfides connect Cys-21/Cys-72, Cys-39/Cys-64, Cys-59/Cys-93, Cys-62/Cys-71, and Cys-84/Cys-107.

In terms of assembly, forms a stable, non-covalent complex with serotriflin.

Its subcellular location is the secreted. Its function is as follows. May serve as a self-defense protein against the toxic effects of the snake venom during accidental envenomation. Does not show inhibitory activity towards brevilysin H6. This is Small serum protein 2 from Protobothrops flavoviridis (Habu).